The primary structure comprises 307 residues: MPYCLYDNTCKVQQTMLDDLSIIIVNYKSEEDIKNLYSRISGVAEFVVVDNSSSSELRQWCSHDDIHYIDSGGNHGYSGGNNMGIRYSLDELNRESVLVLNPDLEINKEDIRELYTIHQSTNYSIISPRILNREGIPVNESPTPEGTLFRSIGLLPALPGKEHNLKPVDHAHGSCMMISESVFEQIGYLNESFFMYYEEIEFCYRARRENINIGQCQVVDAIHNQPVDQTRFESSYQVYLDFRNRFLASNSIFSKSIDRIQYTTLSILISGWMVVRMLFEKKIEYIAPAIFGALHGIQNRTGKPERM.

The protein belongs to the glycosyltransferase 2 family.

Its pathway is protein modification; protein glycosylation. The protein operates within cell surface structure biogenesis; S-layer biogenesis. Its function is as follows. Hexosyltransferase involved in N-glycan biosynthetic pathway that takes place under low-salt conditions (1.75 M instead of 3.4 M). Participates in the formation of the tetrasaccharide present at 'Asn-532' of S-layer glycoprotein Csg, consisting of a sulfated hexose, 2 hexoses and rhamnose. Involved in the addition of final rhamnose (sugar 4) of the tetrasaccharide on the dolichol phosphate carrier. This is Low-salt glycan biosynthesis hexosyltransferase Agl10 (agl10) from Haloferax volcanii (strain ATCC 29605 / DSM 3757 / JCM 8879 / NBRC 14742 / NCIMB 2012 / VKM B-1768 / DS2) (Halobacterium volcanii).